The following is a 446-amino-acid chain: Histidine--tRNA ligase (446 aa).

This sequence belongs to the class-II aminoacyl-tRNA synthetase family. In terms of assembly, homodimer.

The protein localises to the cytoplasm. It catalyses the reaction tRNA(His) + L-histidine + ATP = L-histidyl-tRNA(His) + AMP + diphosphate + H(+). The protein is Histidine--tRNA ligase of Burkholderia cenocepacia (strain ATCC BAA-245 / DSM 16553 / LMG 16656 / NCTC 13227 / J2315 / CF5610) (Burkholderia cepacia (strain J2315)).